A 197-amino-acid chain; its full sequence is Peptidoglycan-recognition protein 1 (197 aa).

An N-terminal signal peptide occupies residues 1–23 (MKLATITFFLLTEIFFYISYAEA). Cystine bridges form between C31-C154 and C68-C74. The N-acetylmuramoyl-L-alanine amidase domain occupies 53-180 (KPLERVVIHH…RNVKATKSPG (128 aa)).

Belongs to the N-acetylmuramoyl-L-alanine amidase 2 family. In terms of tissue distribution, localizes to plasma (at protein level).

It is found in the secreted. In terms of biological role, peptidoglycan-recognition protein probably involved in innate immunity by binding to peptidoglycans (PGN) of bacteria and activating the prophenoloxidase (proPO) cascade immune response. Binds to 1,3-beta-D-glucan and PGN. The sequence is that of Peptidoglycan-recognition protein 1 (PGRP-1) from Holotrichia diomphalia (Korean black chafer).